Reading from the N-terminus, the 451-residue chain is Heat shock factor protein (451 aa).

The DNA-binding element occupies 12–117 (VPAFLAKLWT…LLENIKRKVN (106 aa)). Disordered stretches follow at residues 210-273 (LNDS…LEAS) and 285-307 (LTPS…PISP). Residues 232 to 246 (PSSTSYPVSGFTDSS) show a composition bias toward polar residues.

The protein belongs to the HSF family. In terms of assembly, homotrimer. In terms of processing, exhibits temperature-dependent phosphorylation.

Its subcellular location is the nucleus. In terms of biological role, DNA-binding protein that specifically binds heat shock promoter elements (HSE) and activates transcription. The sequence is that of Heat shock factor protein (hsf1) from Xenopus laevis (African clawed frog).